The following is a 200-amino-acid chain: 3-isopropylmalate dehydratase small subunit (200 aa).

It belongs to the LeuD family. LeuD type 1 subfamily. In terms of assembly, heterodimer of LeuC and LeuD.

The catalysed reaction is (2R,3S)-3-isopropylmalate = (2S)-2-isopropylmalate. Its pathway is amino-acid biosynthesis; L-leucine biosynthesis; L-leucine from 3-methyl-2-oxobutanoate: step 2/4. Catalyzes the isomerization between 2-isopropylmalate and 3-isopropylmalate, via the formation of 2-isopropylmaleate. The protein is 3-isopropylmalate dehydratase small subunit of Actinobacillus pleuropneumoniae serotype 5b (strain L20).